Consider the following 59-residue polypeptide: Large ribosomal subunit protein bL32 (59 aa).

Belongs to the bacterial ribosomal protein bL32 family.

The polypeptide is Large ribosomal subunit protein bL32 (Anaeromyxobacter dehalogenans (strain 2CP-C)).